Consider the following 218-residue polypeptide: MKFFIDTANLNEIREAQELGILDGVTTNPSLMAKEGISGKDNVFKHYKAICDIVDGDVSAEVIATDYKGIIEEGEELITIDPKIVVKVPMIKDGIKAIKYFSQKGIRTNCTLVFSAGQALLAAKAGATYVSPFIGRLDDISQDGMELIAQIVGIYRNYDYQTEVLAASVRHTMHLINCAEVGADVVTCPLNVITGLLNHPLTDSGLAKFLADHKKVNG.

The Schiff-base intermediate with substrate role is filled by Lys87.

This sequence belongs to the transaldolase family. Type 3B subfamily.

The protein resides in the cytoplasm. The enzyme catalyses D-sedoheptulose 7-phosphate + D-glyceraldehyde 3-phosphate = D-erythrose 4-phosphate + beta-D-fructose 6-phosphate. Its pathway is carbohydrate degradation; pentose phosphate pathway; D-glyceraldehyde 3-phosphate and beta-D-fructose 6-phosphate from D-ribose 5-phosphate and D-xylulose 5-phosphate (non-oxidative stage): step 2/3. In terms of biological role, transaldolase is important for the balance of metabolites in the pentose-phosphate pathway. The protein is Probable transaldolase of Cytophaga hutchinsonii (strain ATCC 33406 / DSM 1761 / CIP 103989 / NBRC 15051 / NCIMB 9469 / D465).